The following is a 1007-amino-acid chain: Lysosomal alpha-mannosidase (1007 aa).

Residues 1 to 47 (MGASVLPLGLGAGDCQSSSGRRMSACLPRTALSFLLSLLLATPGARA) form the signal peptide. 2 cysteine pairs are disulfide-bonded: Cys53/Cys356 and Cys266/Cys271. His70 and Asp72 together coordinate Zn(2+). Residue Asn131 is glycosylated (N-linked (GlcNAc...) asparagine). Residue Asp194 coordinates Zn(2+). The active-site Nucleophile is the Asp194. N-linked (GlcNAc...) asparagine glycosylation is found at Asn308, Asn343, and Asn365. 2 disulfides stabilise this stretch: Cys410-Cys470 and Cys491-Cys499. His444 is a binding site for Zn(2+). Asn495, Asn540, Asn639, Asn686, Asn760, and Asn927 each carry an N-linked (GlcNAc...) asparagine glycan.

The protein belongs to the glycosyl hydrolase 38 family. It depends on Zn(2+) as a cofactor.

It localises to the lysosome. The enzyme catalyses Hydrolysis of terminal, non-reducing alpha-D-mannose residues in alpha-D-mannosides.. Its function is as follows. Necessary for the catabolism of N-linked carbohydrates released during glycoprotein turnover. The sequence is that of Lysosomal alpha-mannosidase (MAN2B1) from Cavia porcellus (Guinea pig).